A 957-amino-acid polypeptide reads, in one-letter code: Glycine dehydrogenase (decarboxylating) (957 aa).

Lys-708 is subject to N6-(pyridoxal phosphate)lysine.

This sequence belongs to the GcvP family. In terms of assembly, the glycine cleavage system is composed of four proteins: P, T, L and H. It depends on pyridoxal 5'-phosphate as a cofactor.

It carries out the reaction N(6)-[(R)-lipoyl]-L-lysyl-[glycine-cleavage complex H protein] + glycine + H(+) = N(6)-[(R)-S(8)-aminomethyldihydrolipoyl]-L-lysyl-[glycine-cleavage complex H protein] + CO2. The glycine cleavage system catalyzes the degradation of glycine. The P protein binds the alpha-amino group of glycine through its pyridoxal phosphate cofactor; CO(2) is released and the remaining methylamine moiety is then transferred to the lipoamide cofactor of the H protein. This Escherichia coli O81 (strain ED1a) protein is Glycine dehydrogenase (decarboxylating).